The sequence spans 527 residues: GMP synthase [glutamine-hydrolyzing] (527 aa).

One can recognise a Glutamine amidotransferase type-1 domain in the interval 20–208; the sequence is SVVILDYGSQ…LFDVCGCAPT (189 aa). The active-site Nucleophile is the cysteine 97. Active-site residues include histidine 182 and glutamate 184. Residues 209 to 402 enclose the GMPS ATP-PPase domain; it reads WTAESFVEQA…LGLPEEIVQR (194 aa). 236–242 provides a ligand contact to ATP; sequence SGGVDSS.

As to quaternary structure, homodimer.

The enzyme catalyses XMP + L-glutamine + ATP + H2O = GMP + L-glutamate + AMP + diphosphate + 2 H(+). It participates in purine metabolism; GMP biosynthesis; GMP from XMP (L-Gln route): step 1/1. Its function is as follows. Catalyzes the synthesis of GMP from XMP. This chain is GMP synthase [glutamine-hydrolyzing], found in Thermomicrobium roseum (strain ATCC 27502 / DSM 5159 / P-2).